Consider the following 299-residue polypeptide: Phosphate import ATP-binding protein PstB 1 (299 aa).

The interval 1–51 (MTENEMTSNDSTEPTPTTETAASSPDPSGDPLIEQSIDVEGTDSTAAETGK) is disordered. Positions 10-27 (DSTEPTPTTETAASSPDP) are enriched in low complexity. The region spanning 54–294 (IESSDLNVFY…PESQRVEDYI (241 aa)) is the ABC transporter domain. 86-93 (GPSGCGKS) contacts ATP.

This sequence belongs to the ABC transporter superfamily. Phosphate importer (TC 3.A.1.7) family. As to quaternary structure, the complex is composed of two ATP-binding proteins (PstB), two transmembrane proteins (PstC and PstA) and a solute-binding protein (PstS).

The protein resides in the cell membrane. The catalysed reaction is phosphate(out) + ATP + H2O = ADP + 2 phosphate(in) + H(+). Functionally, part of the ABC transporter complex PstSACB involved in phosphate import. Responsible for energy coupling to the transport system. The polypeptide is Phosphate import ATP-binding protein PstB 1 (Haloarcula marismortui (strain ATCC 43049 / DSM 3752 / JCM 8966 / VKM B-1809) (Halobacterium marismortui)).